The primary structure comprises 354 residues: DNA polymerase IV (354 aa).

A UmuC domain is found at 3 to 188 (VIFVDFDYFF…LDIDEIPGIG (186 aa)). Mg(2+) contacts are provided by D7 and D105. E106 is a catalytic residue.

Belongs to the DNA polymerase type-Y family. Monomer. The cofactor is Mg(2+).

The protein localises to the cytoplasm. It catalyses the reaction DNA(n) + a 2'-deoxyribonucleoside 5'-triphosphate = DNA(n+1) + diphosphate. Its function is as follows. Poorly processive, error-prone DNA polymerase involved in untargeted mutagenesis. Copies undamaged DNA at stalled replication forks, which arise in vivo from mismatched or misaligned primer ends. These misaligned primers can be extended by PolIV. Exhibits no 3'-5' exonuclease (proofreading) activity. May be involved in translesional synthesis. This chain is DNA polymerase IV, found in Sulfolobus acidocaldarius (strain ATCC 33909 / DSM 639 / JCM 8929 / NBRC 15157 / NCIMB 11770).